The chain runs to 275 residues: Caspase-3 (275 aa).

Methionine 1 is modified (N-acetylmethionine). 2 consecutive propeptides follow at residues 1-9 and 10-28; these read MENTENSVD and SKSIKTSETKILHGSKSMD. At lysine 11 the chain carries N6-acetyllysine. Residue serine 26 is modified to Phosphoserine. Active-site residues include histidine 121 and cysteine 163. Position 163 is an S-nitrosocysteine; in inhibited form (cysteine 163).

This sequence belongs to the peptidase C14A family. As to quaternary structure, heterotetramer that consists of two anti-parallel arranged heterodimers, each one formed by a 17 kDa (p17) and a 12 kDa (p12) subunit. Interacts with BIRC6/bruce. In terms of processing, cleavage by granzyme B, caspase-6, caspase-8 and caspase-10 generates the two active subunits. Additional processing of the propeptides is likely due to the autocatalytic activity of the activated protease. Active heterodimers between the small subunit of caspase-7 protease and the large subunit of caspase-3 also occur and vice versa. S-nitrosylated on its catalytic site cysteine in unstimulated cell lines and denitrosylated upon activation of the Fas apoptotic pathway, associated with an increase in intracellular caspase activity. Fas therefore activates caspase-3 not only by inducing the cleavage of the caspase zymogen to its active subunits, but also by stimulating the denitrosylation of its active site thiol. Post-translationally, ubiquitinated by BIRC6; this activity is inhibited by DIABLO/SMAC.

It is found in the cytoplasm. It carries out the reaction Strict requirement for an Asp residue at positions P1 and P4. It has a preferred cleavage sequence of Asp-Xaa-Xaa-Asp-|- with a hydrophobic amino-acid residue at P2 and a hydrophilic amino-acid residue at P3, although Val or Ala are also accepted at this position.. Its activity is regulated as follows. Inhibited by BIRC6; following inhibition of BIRC6-caspase binding by DIABLO/SMAC, BIRC6 is subjected to caspase cleavage, leading to an increase in active caspases. Functionally, involved in the activation cascade of caspases responsible for apoptosis execution. At the onset of apoptosis, it proteolytically cleaves poly(ADP-ribose) polymerase PARP1 at a '216-Asp-|-Gly-217' bond. Cleaves and activates sterol regulatory element binding proteins (SREBPs) between the basic helix-loop-helix leucine zipper domain and the membrane attachment domain. Cleaves and activates caspase-6, -7 and -9 (CASP6, CASP7 and CASP9, respectively). Cleaves and inactivates interleukin-18 (IL18). Triggers cell adhesion in sympathetic neurons through RET cleavage. Cleaves IL-1 beta between an Asp and an Ala, releasing the mature cytokine which is involved in a variety of inflammatory processes. Cleaves and inhibits serine/threonine-protein kinase AKT1 in response to oxidative stress. Acts as an inhibitor of type I interferon production during virus-induced apoptosis by mediating cleavage of antiviral proteins CGAS, IRF3 and MAVS, thereby preventing cytokine overproduction. Also involved in pyroptosis by mediating cleavage and activation of gasdermin-E (GSDME). Cleaves XRCC4 and phospholipid scramblase proteins XKR4, XKR8 and XKR9, leading to promote phosphatidylserine exposure on apoptotic cell surface. Cleaves BIRC6 following inhibition of BIRC6-caspase binding by DIABLO/SMAC. In Bos taurus (Bovine), this protein is Caspase-3 (CASP3).